The primary structure comprises 414 residues: Imidazolonepropionase (414 aa).

Residues histidine 73 and histidine 75 each contribute to the Fe(3+) site. The Zn(2+) site is built by histidine 73 and histidine 75. 4-imidazolone-5-propanoate-binding residues include arginine 82, tyrosine 145, and histidine 178. Tyrosine 145 lines the N-formimidoyl-L-glutamate pocket. Histidine 249 is a Fe(3+) binding site. Histidine 249 contributes to the Zn(2+) binding site. Residue glutamine 252 coordinates 4-imidazolone-5-propanoate. Aspartate 324 is a Fe(3+) binding site. Aspartate 324 is a binding site for Zn(2+). N-formimidoyl-L-glutamate-binding residues include asparagine 326 and glycine 328. Serine 329 serves as a coordination point for 4-imidazolone-5-propanoate.

Belongs to the metallo-dependent hydrolases superfamily. HutI family. It depends on Zn(2+) as a cofactor. Fe(3+) is required as a cofactor.

The protein localises to the cytoplasm. It catalyses the reaction 4-imidazolone-5-propanoate + H2O = N-formimidoyl-L-glutamate. It participates in amino-acid degradation; L-histidine degradation into L-glutamate; N-formimidoyl-L-glutamate from L-histidine: step 3/3. In terms of biological role, catalyzes the hydrolytic cleavage of the carbon-nitrogen bond in imidazolone-5-propanoate to yield N-formimidoyl-L-glutamate. It is the third step in the universal histidine degradation pathway. This is Imidazolonepropionase from Shewanella denitrificans (strain OS217 / ATCC BAA-1090 / DSM 15013).